The primary structure comprises 268 residues: Ubiquinone biosynthesis protein COQ4 homolog, mitochondrial (268 aa).

Histidine 171, aspartate 172, histidine 175, and glutamate 187 together coordinate Zn(2+).

This sequence belongs to the COQ4 family. As to quaternary structure, component of a multi-subunit COQ enzyme complex. It depends on Zn(2+) as a cofactor.

It is found in the mitochondrion inner membrane. It carries out the reaction a 4-hydroxy-3-methoxy-5-(all-trans-polyprenyl)benzoate + H(+) = a 2-methoxy-6-(all-trans-polyprenyl)phenol + CO2. It functions in the pathway cofactor biosynthesis; ubiquinone biosynthesis. In terms of biological role, lyase that catalyzes the C1-decarboxylation of 4-hydroxy-3-methoxy-5-(all-trans-polyprenyl)benzoic acid into 2-methoxy-6-(all-trans-polyprenyl)phenol during ubiquinone biosynthesis. The chain is Ubiquinone biosynthesis protein COQ4 homolog, mitochondrial from Drosophila yakuba (Fruit fly).